Here is a 324-residue protein sequence, read N- to C-terminus: MAAVVSAAGGACPAVLQVAGLYRGLCAVRSRALGLGFVSPAQLRVFPVRRGSGLPPEGADGSGVSELEANPFYDRYRDKIQQLRRSDPAAFESRLEKRSEFRKQPVGHSKQSDFIKCMEQKTDALGKQPVSKGFTKDKTLSSVFNVEMVKDKTAEEIKQIWQQYFSAKDTVYAVIPKEKFDLIWNRAQSCPTFLCALPRRDGYEFFVGQWTGTELHFTALINIQTRGDAAASQLILYHYPELKEEKGIVLMTAEMDSTFLNVVEAQCIANQVQLFYATDRKEIYGLVETFNFRPNEFKYMSVIAELEQSGLGAELKRAQNQDKT.

The N-terminal 54 residues, 1-54 (MAAVVSAAGGACPAVLQVAGLYRGLCAVRSRALGLGFVSPAQLRVFPVRRGSGL), are a transit peptide targeting the mitochondrion.

The protein belongs to the ATP11 family. As to quaternary structure, interacts with ATP5F1B; involved in the assembly of the F1 component of the mitochondrial ATP synthase (ATPase). Widely expressed but with low level.

Its subcellular location is the mitochondrion inner membrane. Its function is as follows. Has a complex stabilizing activity in the assembly of the mitochondrial F1-F0 complex. This Mus musculus (Mouse) protein is ATP synthase mitochondrial F1 complex assembly factor 1.